We begin with the raw amino-acid sequence, 79 residues long: Conotoxin PnMSGL-03 (79 aa).

An N-terminal signal peptide occupies residues Met1–Ser20. The propeptide occupies His21–Ile44. Intrachain disulfides connect Cys52/Cys64, Cys56/Cys73, and Cys63/Cys77. A Leucine amide modification is found at Leu78.

The protein belongs to the conotoxin O3 superfamily. Expressed by the venom duct.

Its subcellular location is the secreted. The chain is Conotoxin PnMSGL-03 from Conus pennaceus (Feathered cone).